The sequence spans 391 residues: Casein kinase II subunit alpha (391 aa).

The segment at 36 to 41 is interaction with beta subunit; the sequence is QDDYQL. Positions 39–324 constitute a Protein kinase domain; it reads YQLVRKLGRG…AREAMEHPYF (286 aa). ATP-binding positions include 45-53 and K68; that span reads LGRGKYSEV. The Proton acceptor role is filled by D156. A phosphothreonine; by CDK1 mark is found at T344 and T360. Phosphoserine; by CDK1 occurs at positions 362 and 370.

The protein belongs to the protein kinase superfamily. Ser/Thr protein kinase family. CK2 subfamily. Heterotetramer composed of two catalytic subunits (alpha chain and/or alpha' chain) and two regulatory subunits (beta chains). The tetramer can exist as a combination of 2 alpha/2 beta, 2 alpha'/2 beta or 1 alpha/1 alpha'/2 beta subunits. Also part of a CK2-SPT16-SSRP1 complex composed of SSRP1, SUPT16H, CSNK2A1, CSNK2A2 and CSNK2B, which forms following UV irradiation. Interacts with RNPS1. Interacts with SNAI1. Interacts with PML. Interacts with CCAR2. Interacts with HIRIP3. In terms of processing, phosphorylated at Thr-344, Thr-360, Ser-362 and Ser-370 by CDK1 in prophase and metaphase and dephosphorylated during anaphase. Phosphorylation does not directly affect casein kinase 2 activity, but may contribute to its regulation by forming binding sites for interacting proteins and/or targeting it to different compartments.

It is found in the nucleus. The catalysed reaction is L-seryl-[protein] + ATP = O-phospho-L-seryl-[protein] + ADP + H(+). It carries out the reaction L-threonyl-[protein] + ATP = O-phospho-L-threonyl-[protein] + ADP + H(+). Constitutively active protein kinase whose activity is not directly affected by phosphorylation. Seems to be regulated by level of expression and localization. Catalytic subunit of a constitutively active serine/threonine-protein kinase complex that phosphorylates a large number of substrates containing acidic residues C-terminal to the phosphorylated serine or threonine. Regulates numerous cellular processes, such as cell cycle progression, apoptosis and transcription, as well as viral infection. May act as a regulatory node which integrates and coordinates numerous signals leading to an appropriate cellular response. During mitosis, functions as a component of the p53/TP53-dependent spindle assembly checkpoint (SAC) that maintains cyclin-B-CDK1 activity and G2 arrest in response to spindle damage. Also required for p53/TP53-mediated apoptosis, phosphorylating 'Ser-392' of p53/TP53 following UV irradiation. Phosphorylates a number of DNA repair proteins in response to DNA damage, such as MDC1, MRE11, RAD9A, RAD51 and HTATSF1, promoting their recruitment to DNA damage sites. Can also negatively regulate apoptosis. Phosphorylates the caspases CASP9 and CASP2 and the apoptotic regulator NOL3. Phosphorylation protects CASP9 from cleavage and activation by CASP8, and inhibits the dimerization of CASP2 and activation of CASP8. Phosphorylates YY1, protecting YY1 from cleavage by CASP7 during apoptosis. Regulates transcription by direct phosphorylation of RNA polymerases I, II, III and IV. Also phosphorylates and regulates numerous transcription factors including NF-kappa-B, STAT1, CREB1, IRF1, IRF2, ATF1, ATF4, SRF, MAX, JUN, FOS, MYC and MYB. Phosphorylates Hsp90 and its co-chaperones FKBP4 and CDC37, which is essential for chaperone function. Mediates sequential phosphorylation of FNIP1, promoting its gradual interaction with Hsp90, leading to activate both kinase and non-kinase client proteins of Hsp90. Regulates Wnt signaling by phosphorylating CTNNB1 and the transcription factor LEF1. Acts as an ectokinase that phosphorylates several extracellular proteins. Phosphorylates PML at 'Ser-565' and primes it for ubiquitin-mediated degradation. Plays an important role in the circadian clock function by phosphorylating BMAL1 at 'Ser-90' which is pivotal for its interaction with CLOCK and which controls CLOCK nuclear entry. Phosphorylates FMR1, promoting FMR1-dependent formation of a membraneless compartment. May phosphorylate histone H2A on 'Ser-1'. In Mus musculus (Mouse), this protein is Casein kinase II subunit alpha (Csnk2a1).